Consider the following 148-residue polypeptide: Universal stress protein YxiE (148 aa).

Positions 1–18 (MFNKMLVAIDGSDMSAKA) are cleaved as a signal peptide.

It belongs to the universal stress protein A family.

The polypeptide is Universal stress protein YxiE (yxiE) (Bacillus subtilis (strain 168)).